The sequence spans 236 residues: Proteasome subunit alpha (236 aa).

It belongs to the peptidase T1A family. The 20S proteasome core is composed of 14 alpha and 14 beta subunits that assemble into four stacked heptameric rings, resulting in a barrel-shaped structure. The two inner rings, each composed of seven catalytic beta subunits, are sandwiched by two outer rings, each composed of seven alpha subunits. The catalytic chamber with the active sites is on the inside of the barrel. Has a gated structure, the ends of the cylinder being occluded by the N-termini of the alpha-subunits. Is capped by the proteasome-associated ATPase, ARC.

It is found in the cytoplasm. The protein operates within protein degradation; proteasomal Pup-dependent pathway. The formation of the proteasomal ATPase ARC-20S proteasome complex, likely via the docking of the C-termini of ARC into the intersubunit pockets in the alpha-rings, may trigger opening of the gate for substrate entry. Interconversion between the open-gate and close-gate conformations leads to a dynamic regulation of the 20S proteasome proteolysis activity. Component of the proteasome core, a large protease complex with broad specificity involved in protein degradation. The chain is Proteasome subunit alpha from Pseudarthrobacter chlorophenolicus (strain ATCC 700700 / DSM 12829 / CIP 107037 / JCM 12360 / KCTC 9906 / NCIMB 13794 / A6) (Arthrobacter chlorophenolicus).